The sequence spans 243 residues: UPF0502 protein Rmet_3697 (243 aa).

Residues 1 to 11 (MTDTPDTPDTP) are compositionally biased toward low complexity. The segment at 1 to 23 (MTDTPDTPDTPMATGASSRPPLR) is disordered.

Belongs to the UPF0502 family.

This Cupriavidus metallidurans (strain ATCC 43123 / DSM 2839 / NBRC 102507 / CH34) (Ralstonia metallidurans) protein is UPF0502 protein Rmet_3697.